The sequence spans 597 residues: Phosphoinositide phospholipase C 4 (597 aa).

The EF-hand domain occupies 26 to 60 (GPVEDVRDLFEKYTEGDAHMSPEQLQKLMTEEGGE). In terms of domain architecture, PI-PLC X-box spans 114–257 (QNMDAPLSHY…LKEKILISTK (144 aa)). Active-site residues include H129 and H174. The segment covering 259–290 (PKEYLEANDTKEKDNGEKGKDSDEDVWGKEPE) has biased composition (basic and acidic residues). Residues 259–324 (PKEYLEANDT…ERGSCESDTS (66 aa)) form a disordered region. The segment covering 293-309 (ISTQSDLDKVTSSVNDL) has biased composition (polar residues). The PI-PLC Y-box domain maps to 333-449 (KRLIAIHAGK…GYVKKPDFLM (117 aa)). Residues 449 to 579 (MDASPNGQDF…QGIRAVPLFN (131 aa)) form the C2 domain.

Ca(2+) serves as cofactor. As to expression, low expression in leaves, roots, flowers and siliques. Expressed in pollen and in cells of the stigma surface.

The protein localises to the cytoplasm. The protein resides in the cytosol. Its subcellular location is the cell membrane. The catalysed reaction is a 1,2-diacyl-sn-glycero-3-phospho-(1D-myo-inositol-4,5-bisphosphate) + H2O = 1D-myo-inositol 1,4,5-trisphosphate + a 1,2-diacyl-sn-glycerol + H(+). Its function is as follows. The production of the second messenger molecules diacylglycerol (DAG) and inositol 1,4,5-trisphosphate (IP3) is mediated by activated phosphatidylinositol-specific phospholipase C enzymes. This is Phosphoinositide phospholipase C 4 (PLC4) from Arabidopsis thaliana (Mouse-ear cress).